The primary structure comprises 189 residues: Translation initiation factor IF-3 (189 aa).

This sequence belongs to the IF-3 family. As to quaternary structure, monomer.

The protein localises to the cytoplasm. In terms of biological role, IF-3 binds to the 30S ribosomal subunit and shifts the equilibrium between 70S ribosomes and their 50S and 30S subunits in favor of the free subunits, thus enhancing the availability of 30S subunits on which protein synthesis initiation begins. This is Translation initiation factor IF-3 from Corynebacterium glutamicum (strain ATCC 13032 / DSM 20300 / JCM 1318 / BCRC 11384 / CCUG 27702 / LMG 3730 / NBRC 12168 / NCIMB 10025 / NRRL B-2784 / 534).